A 92-amino-acid chain; its full sequence is Small ribosomal subunit protein uS19c (92 aa).

This sequence belongs to the universal ribosomal protein uS19 family.

The protein resides in the plastid. It localises to the chloroplast. In terms of biological role, protein S19 forms a complex with S13 that binds strongly to the 16S ribosomal RNA. In Calycanthus floridus var. glaucus (Eastern sweetshrub), this protein is Small ribosomal subunit protein uS19c.